The following is a 401-amino-acid chain: Jumonji C domain-containing protein 5 (401 aa).

Residues 255 to 401 enclose the JmjC domain; sequence EYLAQHELFA…PSFSVSFWWE (147 aa). 3 residues coordinate Fe cation: H306, D308, and H385.

Fe(2+) is required as a cofactor. As to expression, expressed in neurons close to the dorsal lateral neurons involved in circadian rhythm.

The protein localises to the nucleus. Its subcellular location is the nucleoplasm. The protein resides in the cytoplasm. It carries out the reaction L-arginyl-[protein] + 2-oxoglutarate + O2 = (3R)-3-hydroxy-L-arginyl-[protein] + succinate + CO2. In terms of biological role, bifunctional enzyme that acts both as an endopeptidase and 2-oxoglutarate-dependent monooxygenase. May be involved in regulation of behavior and circadian rhythms. This is Jumonji C domain-containing protein 5 from Drosophila melanogaster (Fruit fly).